The sequence spans 228 residues: Ran-binding protein 1 homolog a (228 aa).

The span at 1-13 (MATNEPEHEHRDE) shows a compositional bias: basic and acidic residues. Disordered regions lie at residues 1-30 (MATN…QVAP) and 159-228 (SEEE…GPST). A compositionally biased stretch (acidic residues) spans 14–24 (EEAGANEDEDT). The region spanning 27–162 (QVAPIVRLEE…FKEVAESEEE (136 aa)) is the RanBD1 domain. The segment covering 179–228 (LTVEETKTEEKTEAKAVETAKTEVKAEEKKESEAEKSGEAKKTEESGPST) has biased composition (basic and acidic residues).

Interacts with the GTP-bound form of RAN1, RAN2 and RAN3. Ubiquitous. Preferentially expressed in root tips and gynoecium.

It localises to the nucleus. It is found in the nuclear pore complex. This chain is Ran-binding protein 1 homolog a (RANBP1A), found in Arabidopsis thaliana (Mouse-ear cress).